The primary structure comprises 504 residues: ATP-dependent rRNA helicase RRP3 (504 aa).

The segment covering 34 to 62 (ASASSAASTKESLPVSETISISTSETPVS) has biased composition (low complexity). Residues 34–99 (ASASSAASTK…SSSSPPSVQS (66 aa)) are disordered. Residues 68 to 79 (SNKEDLSTKKDQ) are compositionally biased toward basic and acidic residues. Over residues 80–99 (SSASSSSSTSSSSSPPSVQS) the composition is skewed to low complexity. The Q motif signature appears at 98-126 (QSFTEFDLVPELLESIQSLKYTQPTPIQA). The 173-residue stretch at 129–301 (IPHALQGKDI…RSLNSPVQVE (173 aa)) folds into the Helicase ATP-binding domain. 142-149 (AETGSGKT) provides a ligand contact to ATP. Positions 248–251 (DEVD) match the DEAD box motif. The Helicase C-terminal domain occupies 327 to 471 (RLIQIVNLDS…DLPLDEMQGL (145 aa)).

It belongs to the DEAD box helicase family. DDX47/RRP3 subfamily. As to quaternary structure, interacts with the SSU processome.

The protein localises to the nucleus. The catalysed reaction is ATP + H2O = ADP + phosphate + H(+). Its function is as follows. ATP-dependent rRNA helicase required for pre-ribosomal RNA processing. Involved in the maturation of the 35S-pre-rRNA and to its cleavage to mature 18S rRNA. This Lodderomyces elongisporus (strain ATCC 11503 / CBS 2605 / JCM 1781 / NBRC 1676 / NRRL YB-4239) (Yeast) protein is ATP-dependent rRNA helicase RRP3.